A 185-amino-acid chain; its full sequence is Lysozyme g (185 aa).

At glutamine 1 the chain carries Pyrrolidone carboxylic acid. Cystine bridges form between cysteine 4–cysteine 60 and cysteine 18–cysteine 29. Active-site residues include glutamate 73 and aspartate 86.

The protein belongs to the glycosyl hydrolase 23 family.

It localises to the secreted. The enzyme catalyses Hydrolysis of (1-&gt;4)-beta-linkages between N-acetylmuramic acid and N-acetyl-D-glucosamine residues in a peptidoglycan and between N-acetyl-D-glucosamine residues in chitodextrins.. The sequence is that of Lysozyme g from Casuarius casuarius (Southern cassowary).